A 166-amino-acid polypeptide reads, in one-letter code: Ureidoglycolate lyase (166 aa).

Belongs to the ureidoglycolate lyase family. In terms of assembly, homodimer. The cofactor is Ni(2+).

The enzyme catalyses (S)-ureidoglycolate = urea + glyoxylate. The protein operates within nitrogen metabolism; (S)-allantoin degradation. In terms of biological role, catalyzes the catabolism of the allantoin degradation intermediate (S)-ureidoglycolate, generating urea and glyoxylate. Involved in the utilization of allantoin as nitrogen source. This Rhizobium etli (strain ATCC 51251 / DSM 11541 / JCM 21823 / NBRC 15573 / CFN 42) protein is Ureidoglycolate lyase.